The chain runs to 113 residues: Hydrogenase maturation factor HybF (113 aa).

2 residues coordinate Ni(2+): H2 and E3. Positions 73, 76, 89, and 92 each coordinate Zn(2+).

It belongs to the HypA/HybF family. HybF subfamily.

Functionally, involved in the maturation of [NiFe] hydrogenases. Required for nickel insertion into the metal center of the hydrogenase. The chain is Hydrogenase maturation factor HybF from Proteus vulgaris.